We begin with the raw amino-acid sequence, 441 residues long: Ribulose bisphosphate carboxylase large chain (441 aa).

Residue K5 is modified to N6,N6,N6-trimethyllysine. Residues N114 and T164 each coordinate substrate. The Proton acceptor role is filled by K166. K168 serves as a coordination point for substrate. Residues K192, D194, and E195 each coordinate Mg(2+). N6-carboxylysine is present on K192. The Proton acceptor role is filled by H285. The substrate site is built by R286, H318, and S370.

This sequence belongs to the RuBisCO large chain family. Type I subfamily. In terms of assembly, heterohexadecamer of 8 large chains and 8 small chains; disulfide-linked. The disulfide link is formed within the large subunit homodimers. Requires Mg(2+) as cofactor. In terms of processing, the disulfide bond which can form in the large chain dimeric partners within the hexadecamer appears to be associated with oxidative stress and protein turnover.

Its subcellular location is the plastid. The protein resides in the chloroplast. It catalyses the reaction 2 (2R)-3-phosphoglycerate + 2 H(+) = D-ribulose 1,5-bisphosphate + CO2 + H2O. It carries out the reaction D-ribulose 1,5-bisphosphate + O2 = 2-phosphoglycolate + (2R)-3-phosphoglycerate + 2 H(+). Its function is as follows. RuBisCO catalyzes two reactions: the carboxylation of D-ribulose 1,5-bisphosphate, the primary event in carbon dioxide fixation, as well as the oxidative fragmentation of the pentose substrate in the photorespiration process. Both reactions occur simultaneously and in competition at the same active site. This is Ribulose bisphosphate carboxylase large chain from Drosera dichrosepala (Rusty sundew).